The primary structure comprises 158 residues: MLCPFCSFPESRVLDSRPADEGNSIRRRRECGECGKRFTTYERVDERPLVVVKKDGRREVFDRAKLLAGFMKACEKRPVPVQRIEDTVHSIERELRSHGELEVLSQAVGELVMNSLLELDEVAYIRFASVYRQFGDIYSFLHEVEKLLKSKEDKKGAL.

Residues 3–34 fold into a zinc finger; that stretch reads CPFCSFPESRVLDSRPADEGNSIRRRRECGEC. The region spanning 49 to 139 is the ATP-cone domain; the sequence is LVVVKKDGRR…VYRQFGDIYS (91 aa).

It belongs to the NrdR family. Zn(2+) is required as a cofactor.

Its function is as follows. Negatively regulates transcription of bacterial ribonucleotide reductase nrd genes and operons by binding to NrdR-boxes. This Desulforamulus reducens (strain ATCC BAA-1160 / DSM 100696 / MI-1) (Desulfotomaculum reducens) protein is Transcriptional repressor NrdR.